A 662-amino-acid polypeptide reads, in one-letter code: Polyunsaturated fatty acid lipoxygenase ALOX15 (662 aa).

In terms of domain architecture, PLAT spans 2–114 (GLYRIRVSTG…VLSLPEGTGR (113 aa)). The 548-residue stretch at 115–662 (TVGDDPQGLF…PSIVENSVAI (548 aa)) folds into the Lipoxygenase domain. The Fe cation site is built by His360, His365, His540, His544, and Ile662.

It belongs to the lipoxygenase family. In terms of assembly, interacts with PEBP1; in response to IL13/interleukin-13, prevents the interaction of PEBP1 with RAF1 to activate the ERK signaling cascade. Fe cation serves as cofactor.

The protein resides in the cytoplasm. Its subcellular location is the cytosol. It localises to the cell membrane. The protein localises to the lipid droplet. The enzyme catalyses (5Z,8Z,11Z,14Z)-eicosatetraenoate + O2 = (12S)-hydroperoxy-(5Z,8Z,10E,14Z)-eicosatetraenoate. It catalyses the reaction (9Z,12Z)-octadecadienoate + O2 = (13S)-hydroperoxy-(9Z,11E)-octadecadienoate. It carries out the reaction (5Z,8Z,11Z,14Z)-eicosatetraenoate + O2 = (15S)-hydroperoxy-(5Z,8Z,11Z,13E)-eicosatetraenoate. The catalysed reaction is (5Z,8Z,11Z,14Z)-eicosatetraenoate + 2 O2 = (14R,15S)-dihydroperoxy-(5Z,8Z,10E,12E)-eicosatetraenoate. The enzyme catalyses (5Z,8Z,11Z,14Z)-eicosatetraenoate + 2 O2 = (8S,15S)-dihydroperoxy-(5Z,9E,11Z,13E)-eicosatetraenoate. It catalyses the reaction (14S,15R)-epoxy-(5Z,8Z,11Z)-eicosatrienoate + O2 = (8S)-hydroperoxy-(14S,15R)-epoxy-(5Z,9E,11Z)-eicosatrienoate. It carries out the reaction (14S,15R)-epoxy-(5Z,8Z,11Z)-eicosatrienoate + O2 = (12S)-hydroperoxy-(14S,15R)-epoxy-(5Z,8Z,10E)-eicosatrienoate. The catalysed reaction is (14R,15S)-epoxy-(5Z,8Z,11Z)-eicosatrienoate + O2 = (5S)-hydroperoxy-(14R,15S)-epoxy-(6E,8Z,11Z)-eicosatrienoate. The enzyme catalyses (14R,15S)-epoxy-(5Z,8Z,11Z)-eicosatrienoate + O2 = (12S)-hydroperoxy-(14R,15S)-epoxy-(5Z,8Z,10E)-eicosatrienoate. It catalyses the reaction (15R)-hydroperoxy-(5Z,8Z,11Z,13E)-eicosatetraenoate = 15-oxo-(5Z,8Z,11Z,13E)-eicosatetraenoate + H2O. It carries out the reaction (15S)-hydroperoxy-(5Z,8Z,11Z,13E)-eicosatetraenoate = (14S,15S)-epoxy-(5Z,8Z,10E,12E)-eicosatetraenoate + H2O. The catalysed reaction is (12S)-hydroperoxy-(5Z,8Z,10E,14Z)-eicosatetraenoate = (8S)-hydroxy-(11S,12S)-epoxy-(5Z,9E,14Z)-eicosatrienoate. The enzyme catalyses (4Z,7Z,10Z,13Z,16Z)-docosapentaenoate + O2 = 14-hydroperoxy-(4Z,7Z,10Z,12E,16Z)-docosapentaenoate. It catalyses the reaction (7Z,10Z,13Z,16Z,19Z)-docosapentaenoate + O2 = 14-hydroperoxy-(7Z,10Z,12E,16Z,19Z)-docosapentaenoate. It carries out the reaction (4Z,7Z,10Z,13Z,16Z,19Z)-docosahexaenoate + O2 = (14S)-hydroperoxy-(4Z,7Z,10Z,12E,16Z,19Z)-docosahexaenoate. The catalysed reaction is (4Z,7Z,10Z,13Z,16Z,19Z)-docosahexaenoate + O2 = (17S)-hydroperoxy-(4Z,7Z,10Z,13Z,15E,19Z)-docosahexaenoate. The enzyme catalyses (7S)-hydroperoxy-(4Z,8E,10Z,13Z,16Z,19Z)-docosahexaenoate + O2 = (7S,14S)-dihydroperoxy-(4Z,8E,10Z,12E,16Z,19Z)-docosahexaenoate. It catalyses the reaction (7S)-hydroperoxy-(4Z,8E,10Z,13Z,16Z,19Z)-docosahexaenoate + O2 = (7S,17S)-dihydroperoxy-(4Z,8E,10Z,13Z,15E,19Z)-docosahexaenoate. It carries out the reaction (4Z,7Z,10Z,13Z,16Z,19Z)-docosahexaenoate + O2 = (11S)-hydroperoxy-(4Z,7Z,9E,13Z,16Z,19Z)-docosahexaenoate. The catalysed reaction is N-(5Z,8Z,11Z,14Z)-eicosatetraenoyl-taurine + O2 = N-(12S)-hydroperoxy-(5Z,8Z,10E,14Z)-eicosatetraenoyl-taurine. The enzyme catalyses N-(5Z,8Z,11Z,14Z)-eicosatetraenoyl-gamma-aminobutanoate + O2 = N-(12S)-hydroperoxy-(5Z,8Z,10E,14Z)-eicosatetraenoyl-gamma-aminobutanoate. It catalyses the reaction N-(5Z,8Z,11Z,14Z)-eicosatetraenoyl-glycine + O2 = N-(12S)-hydroperoxy-(5Z,8Z,10E,14Z)-eicosatetraenoyl-glycine. It carries out the reaction N-(5Z,8Z,11Z,14Z)-eicosatetraenoyl-L-alanine + O2 = N-(12S)-hydroperoxy-(5Z,8Z,10E,14Z)-eicosatetraenoyl-alanine. The catalysed reaction is N-(5Z,8Z,11Z,14Z)-eicosatetraenoyl-taurine + O2 = N-(15S)-hydroperoxy-(5Z,8Z,11Z,13E)-eicosatetraenoyl-taurine. The enzyme catalyses N-(5Z,8Z,11Z,14Z)-eicosatetraenoyl-gamma-aminobutanoate + O2 = N-(15S)-hydroperoxy-(5Z,8Z,11Z,13E)-eicosatetraenoyl-gamma-aminobutanoate. It catalyses the reaction N-(5Z,8Z,11Z,14Z)-eicosatetraenoyl-glycine + O2 = N-(15S)-hydroperoxy-(5Z,8Z,11Z,13E)-eicosatetraenoyl-glycine. It carries out the reaction N-(5Z,8Z,11Z,14Z)-eicosatetraenoyl-L-alanine + O2 = N-(15S)-hydroperoxy-(5Z,8Z,11Z,13E)-eicosatetraenoyl-alanine. It participates in lipid metabolism; hydroperoxy eicosatetraenoic acid biosynthesis. Functionally, non-heme iron-containing dioxygenase that catalyzes the stereo-specific peroxidation of free and esterified polyunsaturated fatty acids generating a spectrum of bioactive lipid mediators. It inserts peroxyl groups at C12 or C15 of arachidonate ((5Z,8Z,11Z,14Z)-eicosatetraenoate) producing both 12-hydroperoxyeicosatetraenoate/12-HPETE and 15-hydroperoxyeicosatetraenoate/15-HPETE. It may then act on 12-HPETE to produce hepoxilins, which may show pro-inflammatory properties. Can also peroxidize linoleate ((9Z,12Z)-octadecadienoate) to 13-hydroperoxyoctadecadienoate. May participate in the sequential oxidations of DHA ((4Z,7Z,10Z,13Z,16Z,19Z)-docosahexaenoate) to generate specialized pro-resolving mediators (SPMs)like resolvin D5 ((7S,17S)-diHPDHA) and (7S,14S)-diHPDHA, that actively down-regulate the immune response and have anti-aggregation properties with platelets. Can convert epoxy fatty acids to hydroperoxy-epoxides derivatives followed by an intramolecular nucleophilic substitution leading to the formation of monocyclic endoperoxides. Plays an important role during the maintenance of self-tolerance by peroxidizing membrane-bound phosphatidylethanolamine which can then signal the sorting process for clearance of apoptotic cells during inflammation and prevent an autoimmune response. In addition to its role in the immune and inflammatory responses, this enzyme may play a role in epithelial wound healing in the cornea through production of lipoxin A4 (LXA(4)) and docosahexaenoic acid-derived neuroprotectin D1 (NPD1; 10R,17S-HDHA), both lipid autacoids exhibit anti-inflammatory and neuroprotective properties. Furthermore, it may regulate actin polymerization which is crucial for several biological processes such as the phagocytosis of apoptotic cells. It is also implicated in the generation of endogenous ligands for peroxisome proliferator activated receptor (PPAR-gamma), hence modulating macrophage development and function. It may also exert a negative effect on skeletal development by regulating bone mass through this pathway. As well as participates in ER stress and downstream inflammation in adipocytes, pancreatic islets, and liver. Finally, it is also involved in the cellular response to IL13/interleukin-13. This chain is Polyunsaturated fatty acid lipoxygenase ALOX15, found in Pongo abelii (Sumatran orangutan).